The sequence spans 325 residues: Foldase protein PrsA (325 aa).

The first 20 residues, 1–20, serve as a signal peptide directing secretion; sequence MKLMNKIIVPVTASALLLGA. Residue cysteine 21 is the site of N-palmitoyl cysteine attachment. Cysteine 21 is lipidated: S-diacylglycerol cysteine. The PpiC domain occupies 139–245; the sequence is ENSKKTSHIL…YGYHIIKADK (107 aa). Disordered stretches follow at residues 159–200 and 303–325; these read EGLS…SAKK and PDKIKQQQQQQSQGGSGLTNSGS.

Belongs to the PrsA family.

It is found in the cell membrane. The catalysed reaction is [protein]-peptidylproline (omega=180) = [protein]-peptidylproline (omega=0). In terms of biological role, plays a major role in protein secretion by helping the post-translocational extracellular folding of several secreted proteins. The chain is Foldase protein PrsA from Staphylococcus epidermidis (strain ATCC 35984 / DSM 28319 / BCRC 17069 / CCUG 31568 / BM 3577 / RP62A).